The following is a 554-amino-acid chain: DNA ligase (554 aa).

E253 serves as a coordination point for ATP. K255 functions as the N6-AMP-lysine intermediate in the catalytic mechanism. ATP contacts are provided by R260, R275, E304, F344, R418, and K424.

The protein belongs to the ATP-dependent DNA ligase family. It depends on Mg(2+) as a cofactor.

The enzyme catalyses ATP + (deoxyribonucleotide)n-3'-hydroxyl + 5'-phospho-(deoxyribonucleotide)m = (deoxyribonucleotide)n+m + AMP + diphosphate.. In terms of biological role, DNA ligase that seals nicks in double-stranded DNA during DNA replication, DNA recombination and DNA repair. This is DNA ligase from Haloarcula marismortui (strain ATCC 43049 / DSM 3752 / JCM 8966 / VKM B-1809) (Halobacterium marismortui).